Consider the following 250-residue polypeptide: Glutathione transferase omega-1 (250 aa).

The region spanning 21-101 (SKGSFRVYNM…YLDDAFPETR (81 aa)) is the GST N-terminal domain. C33 acts as the Nucleophile in catalysis. Residues K60 and 85-86 (ES) each bind glutathione. Residues 106–234 (DPYEKVQQKL…TQSLEHGAAF (129 aa)) form the GST C-terminal domain.

It belongs to the GST superfamily. Omega family. As to quaternary structure, homodimer. In terms of tissue distribution, expressed in the intestinal cells.

The protein resides in the cytoplasm. It catalyses the reaction RX + glutathione = an S-substituted glutathione + a halide anion + H(+). It carries out the reaction L-dehydroascorbate + 2 glutathione = glutathione disulfide + L-ascorbate. The catalysed reaction is methylarsonate + 2 glutathione + H(+) = methylarsonous acid + glutathione disulfide + H2O. In terms of biological role, exhibits glutathione-dependent thiol transferase activity. Has dehydroascorbate reductase activity and may contribute to the recycling of ascorbic acid. Participates in the biotransformation of inorganic arsenic and reduces monomethylarsonic acid (MMA). Protects against environmental stress and oxidative stress. The sequence is that of Glutathione transferase omega-1 (gsto-1) from Caenorhabditis elegans.